The following is a 2161-amino-acid chain: Voltage-dependent L-type calcium channel subunit alpha-1D (2161 aa).

3 disordered regions span residues 1–21, 30–49, and 64–100; these read MMMM…ADHA, TRLP…SKQT, and KAAQ…SSNS. Over 1-126 the chain is Cytoplasmic; it reads MMMMMMMKKM…RACISIVEWK (126 aa). Polar residues predominate over residues 38–49; sequence GPTSQPNSSKQT. A compositionally biased stretch (basic residues) spans 82–93; that stretch reads QRKRQQYAKSKK. One copy of the I repeat lies at 113–409; it reads NPIRRACISI…LVLGVLSGEF (297 aa). The helical transmembrane segment at 127-145 threads the bilayer; that stretch reads PFDIFILLAIFANCVALAI. Over 146–163 the chain is Extracellular; sequence YIPFPEDDSNSTNHNLEK. A glycan (N-linked (GlcNAc...) asparagine) is linked at N155. Residues 164 to 183 form a helical membrane-spanning segment; sequence VEYAFLIIFTVETFLKIIAY. Over 184-195 the chain is Cytoplasmic; sequence GLLLHPNAYVRN. Residues 196–214 form a helical membrane-spanning segment; it reads GWNLLDFVIVIVGLFSVIL. Over 215 to 235 the chain is Extracellular; it reads EQLTKETEGGNHSSGKSGGFD. The N-linked (GlcNAc...) asparagine glycan is linked to N225. Residues 236–254 form a helical membrane-spanning segment; the sequence is VKALRAFRVLRPLRLVSGV. Topologically, residues 255–273 are cytoplasmic; sequence PSLQVVLNSIIKAMVPLLH. Residues 274 to 293 traverse the membrane as a helical segment; sequence IALLVLFVIIIYAIIGLELF. Over 294 to 381 the chain is Extracellular; the sequence is IGKMHKTCFF…WMNDAMGFEL (88 aa). The N-linked (GlcNAc...) asparagine glycan is linked to N329. A Ca(2+)-binding site is contributed by E364. A helical transmembrane segment spans residues 382 to 406; that stretch reads PWVYFVSLVIFGSFFVLNLVLGVLS. Residues 407–523 are Cytoplasmic-facing; it reads GEFSKEREKA…RRCRAAVKSV (117 aa). The tract at residues 429–446 is binding to the beta subunit; that stretch reads QQLEEDLKGYLDWITQAE. The tract at residues 449–482 is disordered; that stretch reads DPENEEEGGEEGKRNTSMPTSETESVNTENVSGE. Positions 463–479 are enriched in polar residues; that stretch reads NTSMPTSETESVNTENV. The stretch at 509–755 is one II repeat; the sequence is NRFNRRRCRA…VFLAIAVDNL (247 aa). The chain crosses the membrane as a helical span at residues 524-543; the sequence is TFYWLVIVLVFLNTLTISSE. The Extracellular segment spans residues 544–558; that stretch reads HYNQPDWLTQIQDIA. Residues 559-577 traverse the membrane as a helical segment; sequence NKVLLALFTCEMLVKMYSL. Topologically, residues 578-585 are cytoplasmic; the sequence is GLQAYFVS. Residues 586-604 traverse the membrane as a helical segment; it reads LFNRFDCFVVCGGITETIL. The Extracellular portion of the chain corresponds to 605 to 614; the sequence is VELEIMSPLG. Residues 615–633 form a helical membrane-spanning segment; the sequence is ISVFRCVRLLRIFKVTRHW. Residues 634 to 652 are Cytoplasmic-facing; it reads TSLSNLVASLLNSMKSIAS. A helical transmembrane segment spans residues 653–673; sequence LLLLLFLFIIIFSLLGMQLFG. The Extracellular portion of the chain corresponds to 674–727; it reads GKFNFDETQTKRSTFDNFPQALLTVFQILTGEDWNAVMYDGIMAYGGPSSSGMI. E705 lines the Ca(2+) pocket. The chain crosses the membrane as a helical span at residues 728 to 752; it reads VCIYFIILFICGNYILLNVFLAIAV. Over 753-886 the chain is Cytoplasmic; sequence DNLADAESLN…VGCHKLINHH (134 aa). Over residues 766-790 the composition is skewed to basic and acidic residues; the sequence is KEEAEEKERKKIARKESLENKKNNK. The segment at 766–850 is disordered; sequence KEEAEEKERK…AGPRPRRISE (85 aa). Polar residues predominate over residues 791-802; the sequence is PEVNQIANSDNK. Over residues 825-838 the composition is skewed to acidic residues; that stretch reads VGEEEEEEEEDEPE. The III repeat unit spans residues 873–1155; that stretch reads NPIRVGCHKL…IFVGFVIVTF (283 aa). A helical membrane pass occupies residues 887-905; that stretch reads IFTNLILVFIMLSSAALAA. Residues 906–921 are Extracellular-facing; that stretch reads EDPIRSHSFRNTILGY. A helical transmembrane segment spans residues 922 to 941; that stretch reads FDYAFTAIFTVEILLKMTTF. Residues 942 to 953 lie on the Cytoplasmic side of the membrane; that stretch reads GAFLHKGAFCRN. The helical transmembrane segment at 954 to 972 threads the bilayer; that stretch reads YFNLLDMLVVGVSLVSFGI. Over 973–978 the chain is Extracellular; the sequence is QSSAIS. A helical transmembrane segment spans residues 979–998; it reads VVKILRVLRVLRPLRAINRA. The Cytoplasmic segment spans residues 999–1017; that stretch reads KGLKHVVQCVFVAIRTIGN. A helical transmembrane segment spans residues 1018-1037; sequence IMIVTTLLQFMFACIGVQLF. Residues 1038 to 1127 lie on the Extracellular side of the membrane; sequence KGKFYRCTDE…IGPIYNHRVE (90 aa). The dihydropyridine binding stretch occupies residues 1075 to 1165; sequence RIWQNSDFNF…QEQGEKEYKN (91 aa). Residue E1101 participates in Ca(2+) binding. The chain crosses the membrane as a helical span at residues 1128–1148; it reads ISIFFIIYIIIVAFFMMNIFV. Residues 1149 to 1205 lie on the Cytoplasmic side of the membrane; sequence GFVIVTFQEQGEKEYKNCELDKNQRQCVEYALKARPLRRYIPKNPYQYKFWYVVNSS. One copy of the IV repeat lies at 1192-1467; it reads NPYQYKFWYV…LFVAVIMDNF (276 aa). Residues 1206–1224 form a helical membrane-spanning segment; that stretch reads PFEYMMFVLIMLNTLCLAM. At 1225–1239 the chain is on the extracellular side; that stretch reads QHYEQSKMFNDAMDI. The chain crosses the membrane as a helical span at residues 1240–1259; sequence LNMVFTGVFTVEMVLKVIAF. Topologically, residues 1260-1266 are cytoplasmic; it reads KPKGYFS. Residues 1267–1288 traverse the membrane as a helical segment; sequence DAWNTFDSLIVIGSIIDVALSE. Residues 1289-1313 are Extracellular-facing; sequence ADPTESENVPVPTATPGNSEESNRI. Residues 1314–1333 traverse the membrane as a helical segment; the sequence is SITFFRLFRVMRLVKLLSRG. The Cytoplasmic portion of the chain corresponds to 1334–1352; the sequence is EGIRTLLWTFIKSFQALPY. The chain crosses the membrane as a helical span at residues 1353-1372; sequence VALLIAMLFFIYAVIGMQMF. The Extracellular segment spans residues 1373–1439; the sequence is GKVAMRDNNQ…GEEYTCGSNF (67 aa). Positions 1420 to 1486 are dihydropyridine binding; that stretch reads LCDPESDYNP…LGPHHLDEFK (67 aa). Positions 1432–1475 are phenylalkylamine binding; the sequence is EYTCGSNFAIVYFISFYMLCAFLIINLFVAVIMDNFDYLTRDWS. Residues 1440-1464 traverse the membrane as a helical segment; the sequence is AIVYFISFYMLCAFLIINLFVAVIM. The Cytoplasmic portion of the chain corresponds to 1465–2161; the sequence is DNFDYLTRDW…ADEMICITTL (697 aa). Disordered regions lie at residues 1659 to 1678, 1684 to 1804, 1872 to 1919, and 2108 to 2152; these read SCDL…EDDV, ALLG…VKRT, PGRN…ASHR, and NGNV…EDLA. Positions 1745-1763 are enriched in polar residues; sequence SIGKQVPTSTNANLNNANM. Basic and acidic residues predominate over residues 1779–1797; sequence HVSENGHHSSHKHDREPQR. Residues 2138 to 2152 are compositionally biased toward acidic residues; the sequence is SDEEPDPGRDEEDLA.

This sequence belongs to the calcium channel alpha-1 subunit (TC 1.A.1.11) family. CACNA1D subfamily. In terms of assembly, voltage-dependent calcium channels are multisubunit complexes, consisting of alpha-1, alpha-2, beta and delta subunits in a 1:1:1:1 ratio. The channel activity is directed by the pore-forming and voltage-sensitive alpha-1 subunit. In many cases, this subunit is sufficient to generate voltage-sensitive calcium channel activity. The auxiliary subunits beta and alpha-2/delta linked by a disulfide bridge regulate the channel activity. Channel activity is further modulated, depending on the presence of specific delta subunit isoforms. Interacts (via IQ domain) with CABP1 and CABP4 in a calcium independent manner. Interacts with RIMBP2. In terms of tissue distribution, expressed in pancreatic islets and in brain, where it has been seen in cerebral cortex, hippocampus, basal ganglia, habenula and thalamus. Expressed in the small cell lung carcinoma cell line SCC-9. No expression in skeletal muscle.

The protein localises to the membrane. It catalyses the reaction Ca(2+)(in) = Ca(2+)(out). Its function is as follows. Voltage-sensitive calcium channels (VSCC) mediate the entry of calcium ions into excitable cells and are also involved in a variety of calcium-dependent processes, including muscle contraction, hormone or neurotransmitter release, gene expression, cell motility, cell division and cell death. The isoform alpha-1D gives rise to L-type calcium currents. Long-lasting (L-type) calcium channels belong to the 'high-voltage activated' (HVA) group. They are blocked by dihydropyridines (DHP), phenylalkylamines, and by benzothiazepines. Functionally, voltage-sensitive calcium channels (VSCC) mediate the entry of calcium ions into excitable cells and are also involved in a variety of calcium-dependent processes, including muscle contraction, hormone or neurotransmitter release, gene expression, cell motility, cell division and cell death. The isoform alpha-1D gives rise to L-type calcium currents. The sequence is that of Voltage-dependent L-type calcium channel subunit alpha-1D (CACNA1D) from Homo sapiens (Human).